The primary structure comprises 383 residues: Subtelomeric hrmA-associated cluster protein AFUB_078970 (383 aa).

2 disordered regions span residues 118-145 (NPVSEVPESPPSTVKSSGDASVSDKDDD) and 249-318 (QATQ…SARP). Over residues 119–134 (PVSEVPESPPSTVKSS) the composition is skewed to low complexity. Residues 318 to 364 (PYSAAEDDILQTLVARGLAWEEIEKEFGLRFAKRTMRSLQMRWSRKL) enclose the Myb-like domain.

Myb-like domain-containing protein; part of the subtelomeric hrmA-associated cluster (HAC) containing genes that alter the hyphal surface (such as reduced total chitin or increased beta-glucan exposure) and perturb inter-hyphal interactions within the developing biofilms, resulting in a loss of vertically aligned polarized growing filaments. Consequently, this hypoxia-typic morphotype (called H-MORPH) with altered biofilm architecture leads to increased hypoxia fitness, increased host inflammation, rapid disease progression, and mortality in a murine model of invasive aspergillosis. The protein is Subtelomeric hrmA-associated cluster protein AFUB_078970 of Aspergillus fumigatus (strain CBS 144.89 / FGSC A1163 / CEA10) (Neosartorya fumigata).